The chain runs to 1108 residues: Retinal guanylyl cyclase 1 (1108 aa).

A signal peptide spans 1–54 (MSAWLLPAGGLPGAGFCVPARQSPSSFSRVLRWPRPGLPGLLLLLLLPSPSALS). Over 55 to 465 (AVFKVGVLGP…PDVICNGGVE (411 aa)) the chain is Extracellular. Cys108 and Cys136 form a disulfide bridge. Asn300 carries N-linked (GlcNAc...) asparagine glycosylation. The helical transmembrane segment at 466 to 490 (PGLVFVGFLLVIGMGLTGAFLAHYL) threads the bilayer. The 321-residue stretch at 491–811 (RHRLLHMQMA…DLTFDLFKSI (321 aa)) folds into the Protein kinase domain. Residues 491–1108 (RHRLLHMQMA…KARPGQFTGK (618 aa)) lie on the Cytoplasmic side of the membrane. The 131-residue stretch at 883–1013 (TLYFSDIVGF…DTVNTASRME (131 aa)) folds into the Guanylate cyclase domain. The segment at 1069 to 1108 (IPKPPDLQPGASNHGISLQEIPPERRKKLEKARPGQFTGK) is disordered.

It belongs to the adenylyl cyclase class-4/guanylyl cyclase family. As to quaternary structure, homodimer; requires homodimerization for guanylyl cyclase activity. Interacts (via C-terminus) with RD3 (via C-terminus); promotes the exit of GUCY2E from the endoplasmic reticulum and its trafficking to the photoreceptor outer segments. Interaction with RD3 negatively regulates GUCY2E guanylate cyclase activity. In terms of processing, there are 9 conserved cysteine residues in sensory guanylate cyclases, 6 in the extracellular domain, which may be involved in intra- or interchain disulfide bonds.

It localises to the photoreceptor outer segment membrane. The protein localises to the endoplasmic reticulum membrane. It carries out the reaction GTP = 3',5'-cyclic GMP + diphosphate. Activated by GUCA1A when free calcium ions concentration is low, and inhibited by GUCA1A when free calcium ions concentration is high. Negatively regulated by RD3; RD3 inhibits the basal and GUCA1A-stimulated guanylate cyclase activity. Catalyzes the synthesis of cyclic GMP (cGMP) in rods and cones of photoreceptors. Plays an essential role in phototransduction, by mediating cGMP replenishment. May also participate in the trafficking of membrane-asociated proteins to the photoreceptor outer segment membrane. This chain is Retinal guanylyl cyclase 1 (Gucy2e), found in Mus musculus (Mouse).